Reading from the N-terminus, the 346-residue chain is UDP-N-acetylenolpyruvoylglucosamine reductase (346 aa).

The FAD-binding PCMH-type domain maps to 17–187 (IESQAYALIE…VAVGFTLKKE (171 aa)). Arg-163 is an active-site residue. The Proton donor role is filled by Ser-233. Residue Glu-329 is part of the active site.

The protein belongs to the MurB family. FAD serves as cofactor.

The protein resides in the cytoplasm. It carries out the reaction UDP-N-acetyl-alpha-D-muramate + NADP(+) = UDP-N-acetyl-3-O-(1-carboxyvinyl)-alpha-D-glucosamine + NADPH + H(+). The protein operates within cell wall biogenesis; peptidoglycan biosynthesis. Cell wall formation. The protein is UDP-N-acetylenolpyruvoylglucosamine reductase of Photobacterium profundum (strain SS9).